The chain runs to 241 residues: Eukaryotic translation initiation factor 3 subunit J (241 aa).

A disordered region spans residues 1–97 (MEEDWEQLSE…EEEDMTPEQK (97 aa)). Positions 28–45 (GEDEEEEVKDSWEDEDEL) are enriched in acidic residues. The stretch at 31 to 119 (EEEEVKDSWE…ESDLKNALDT (89 aa)) forms a coiled coil. Basic and acidic residues-rich tracts occupy residues 46-58 (EEKK…ETPK) and 69-87 (IADK…RLEK).

Belongs to the eIF-3 subunit J family. In terms of assembly, component of the eukaryotic translation initiation factor 3 (eIF-3) complex.

The protein localises to the cytoplasm. Component of the eukaryotic translation initiation factor 3 (eIF-3) complex, which is involved in protein synthesis of a specialized repertoire of mRNAs and, together with other initiation factors, stimulates binding of mRNA and methionyl-tRNAi to the 40S ribosome. The eIF-3 complex specifically targets and initiates translation of a subset of mRNAs involved in cell proliferation. This chain is Eukaryotic translation initiation factor 3 subunit J, found in Aedes aegypti (Yellowfever mosquito).